We begin with the raw amino-acid sequence, 64 residues long: Sec-independent protein translocase protein TatA (64 aa).

The chain crosses the membrane as a helical span at residues leucine 10–glycine 30.

This sequence belongs to the TatA/E family. As to quaternary structure, forms a complex with TatC.

Its subcellular location is the cell membrane. In terms of biological role, part of the twin-arginine translocation (Tat) system that transports large folded proteins containing a characteristic twin-arginine motif in their signal peptide across membranes. TatA could form the protein-conducting channel of the Tat system. This chain is Sec-independent protein translocase protein TatA, found in Alkaliphilus oremlandii (strain OhILAs) (Clostridium oremlandii (strain OhILAs)).